The sequence spans 166 residues: MALGLEDKKAIVAEVNEAAKGALSAVVADSRGVTVGEMTGLRRAAREAGVYVKVVRNTLVKRAVAGTDFECLSDTFTGPTLIAFSNEHPGAAARLLKDFATAQEKFEIKAAAFEGEVIPAADIDRLAKLPTYDEALAQLMMTMKEASAGKFVRLLAALRDQKEEAA.

It belongs to the universal ribosomal protein uL10 family. Part of the ribosomal stalk of the 50S ribosomal subunit. The N-terminus interacts with L11 and the large rRNA to form the base of the stalk. The C-terminus forms an elongated spine to which L12 dimers bind in a sequential fashion forming a multimeric L10(L12)X complex.

Forms part of the ribosomal stalk, playing a central role in the interaction of the ribosome with GTP-bound translation factors. This chain is Large ribosomal subunit protein uL10, found in Shewanella woodyi (strain ATCC 51908 / MS32).